Consider the following 701-residue polypeptide: DUF724 domain-containing protein 6 (701 aa).

Disordered stretches follow at residues 299–353 (MKTK…KRAN) and 374–452 (VEPV…DESC). Residues 326 to 340 (LNLEKSAETLTKAES) are compositionally biased toward basic and acidic residues. Over residues 381 to 399 (RVRTATPLKQTKADTQGKS) the composition is skewed to polar residues. 3 stretches are compositionally biased toward basic and acidic residues: residues 403–412 (KTLEPMRDEN), 421–430 (KVLEEKNSEK), and 437–449 (RQEEHNSDLKETD). The DUF724 domain occupies 514–700 (LPFAKKSPFW…LEFQSTASAP (187 aa)). The stretch at 626–670 (LEKKIEAGEIEGHTYEEEMAELELKILELKRQQVVAKEMKEATDK) forms a coiled coil.

In terms of tissue distribution, expressed in roots, stems and flowers.

Its subcellular location is the nucleus. Its function is as follows. May be involved in the polar growth of plant cells via transportation of RNAs. The protein is DUF724 domain-containing protein 6 of Arabidopsis thaliana (Mouse-ear cress).